The primary structure comprises 464 residues: MAVYNYDVVVLGSGPAGEGAAMNAVKAGRKVAVVDNRPLVGGNCTHLGTIPSKALRHSVRQIMQYNTNPLFRQIGEPRWFSFPDVLKSAEKVISKQVTSRTSYYARNRIDTFFGTASFSDEQSVEVVCLNGMVEKLVANQFVIATGSRPYRPADIDFNHPRIYDSDTILTLSHTPRRMIIYGAGVIGCEYASIFSGLGVLVDLIDNREQLLSFLDDEISDALSYHLRNNNVLIRHNEEYERVEGLENGVILHLKSGKKIKADAFLWSNGRTGNTDKLGLENIGLKANSRGQVQVDEHYRTEIGNIYAAGDVIGWPSLASAAYDQGRSAAGSIVENDSWRFVDDVPTGIYTIPEISSIGKNERELTQAKIPYEVGKAFFKSMARAQISFEPVGMLKILFHRETLEVLGVHCFGYQASEIVHIGQAIMNQKGPANSIKYFVNTTFNYPTMAEAYRVAAFDGLNRLF.

An FAD-binding site is contributed by 35–44; sequence DNRPLVGGNC.

Belongs to the class-I pyridine nucleotide-disulfide oxidoreductase family. The cofactor is FAD.

It is found in the cytoplasm. It catalyses the reaction NAD(+) + NADPH = NADH + NADP(+). In terms of biological role, conversion of NADPH, generated by peripheral catabolic pathways, to NADH, which can enter the respiratory chain for energy generation. In Stutzerimonas stutzeri (strain A1501) (Pseudomonas stutzeri), this protein is Soluble pyridine nucleotide transhydrogenase.